The following is a 329-amino-acid chain: UDP-N-acetylenolpyruvoylglucosamine reductase (329 aa).

Positions 28–192 (RVGGPADLLC…ARVEVRLRPG (165 aa)) constitute an FAD-binding PCMH-type domain. The active site involves Arg-172. Residues 204-225 (DRERRRATQPLDRPTFGSTFTN) form a disordered region. Catalysis depends on Ser-221, which acts as the Proton donor. Glu-291 is an active-site residue. A disordered region spans residues 303–329 (LAGLDGHAADGGGPGAASGGARPREAT). Residues 311-320 (ADGGGPGAAS) are compositionally biased toward gly residues.

Belongs to the MurB family. FAD serves as cofactor.

It is found in the cytoplasm. The catalysed reaction is UDP-N-acetyl-alpha-D-muramate + NADP(+) = UDP-N-acetyl-3-O-(1-carboxyvinyl)-alpha-D-glucosamine + NADPH + H(+). The protein operates within cell wall biogenesis; peptidoglycan biosynthesis. Cell wall formation. This is UDP-N-acetylenolpyruvoylglucosamine reductase from Anaeromyxobacter dehalogenans (strain 2CP-C).